The following is a 388-amino-acid chain: Succinate--CoA ligase [ADP-forming] subunit beta (388 aa).

ATP is bound by residues Lys46, 53–55 (GRG), Glu99, Cys102, and Glu107. Asn199 and Asp213 together coordinate Mg(2+). Substrate-binding positions include Asn264 and 321-323 (GIV).

The protein belongs to the succinate/malate CoA ligase beta subunit family. As to quaternary structure, heterotetramer of two alpha and two beta subunits. The cofactor is Mg(2+).

The catalysed reaction is succinate + ATP + CoA = succinyl-CoA + ADP + phosphate. The enzyme catalyses GTP + succinate + CoA = succinyl-CoA + GDP + phosphate. Its pathway is carbohydrate metabolism; tricarboxylic acid cycle; succinate from succinyl-CoA (ligase route): step 1/1. Functionally, succinyl-CoA synthetase functions in the citric acid cycle (TCA), coupling the hydrolysis of succinyl-CoA to the synthesis of either ATP or GTP and thus represents the only step of substrate-level phosphorylation in the TCA. The beta subunit provides nucleotide specificity of the enzyme and binds the substrate succinate, while the binding sites for coenzyme A and phosphate are found in the alpha subunit. The protein is Succinate--CoA ligase [ADP-forming] subunit beta of Actinobacillus pleuropneumoniae serotype 7 (strain AP76).